Reading from the N-terminus, the 384-residue chain is Stress response protein bis1 (384 aa).

2 disordered regions span residues 1 to 22 (MSLA…NKEQ) and 344 to 384 (SPLH…PKRV).

The protein belongs to the ESS2 family. In terms of assembly, heterodimer with ish1.

It localises to the nucleus. The protein localises to the cytoplasm. The protein resides in the cytoskeleton. Its subcellular location is the spindle. In terms of biological role, has a role in maintaining cell viability during stationary phase induced by stress response. May be involved in pre-mRNA splicing. The sequence is that of Stress response protein bis1 (bis1) from Schizosaccharomyces pombe (strain 972 / ATCC 24843) (Fission yeast).